Reading from the N-terminus, the 160-residue chain is 2-C-methyl-D-erythritol 2,4-cyclodiphosphate synthase (160 aa).

A divalent metal cation-binding residues include Asp-11 and His-13. 4-CDP-2-C-methyl-D-erythritol 2-phosphate-binding positions include 11 to 13 (DVH) and 37 to 38 (HS). A divalent metal cation is bound at residue His-45. Residues 59-61 (DIG) and Arg-145 each bind 4-CDP-2-C-methyl-D-erythritol 2-phosphate.

The protein belongs to the IspF family. In terms of assembly, homotrimer. Requires a divalent metal cation as cofactor.

It catalyses the reaction 4-CDP-2-C-methyl-D-erythritol 2-phosphate = 2-C-methyl-D-erythritol 2,4-cyclic diphosphate + CMP. It functions in the pathway isoprenoid biosynthesis; isopentenyl diphosphate biosynthesis via DXP pathway; isopentenyl diphosphate from 1-deoxy-D-xylulose 5-phosphate: step 4/6. Functionally, involved in the biosynthesis of isopentenyl diphosphate (IPP) and dimethylallyl diphosphate (DMAPP), two major building blocks of isoprenoid compounds. Catalyzes the conversion of 4-diphosphocytidyl-2-C-methyl-D-erythritol 2-phosphate (CDP-ME2P) to 2-C-methyl-D-erythritol 2,4-cyclodiphosphate (ME-CPP) with a corresponding release of cytidine 5-monophosphate (CMP). The protein is 2-C-methyl-D-erythritol 2,4-cyclodiphosphate synthase of Neisseria meningitidis serogroup A / serotype 4A (strain DSM 15465 / Z2491).